The following is a 76-amino-acid chain: Sec-independent protein translocase protein TatA (76 aa).

A helical transmembrane segment spans residues 1 to 21 (MGGLSIWHWLIVLLIVALVFG). Residues 43–76 (MKDGDAPADAQQLPRSGTVDVNAKEATRSDSNKA) are disordered. Residues 64–76 (NAKEATRSDSNKA) show a composition bias toward basic and acidic residues.

This sequence belongs to the TatA/E family. As to quaternary structure, the Tat system comprises two distinct complexes: a TatABC complex, containing multiple copies of TatA, TatB and TatC subunits, and a separate TatA complex, containing only TatA subunits. Substrates initially bind to the TatABC complex, which probably triggers association of the separate TatA complex to form the active translocon.

The protein localises to the cell inner membrane. Functionally, part of the twin-arginine translocation (Tat) system that transports large folded proteins containing a characteristic twin-arginine motif in their signal peptide across membranes. TatA could form the protein-conducting channel of the Tat system. This Burkholderia multivorans (strain ATCC 17616 / 249) protein is Sec-independent protein translocase protein TatA.